The primary structure comprises 417 residues: Alpha-ionylideneethane synthase aba3 (417 aa).

This sequence belongs to the alpha-ionylideneethane synthase family.

It functions in the pathway hormone biosynthesis. Functionally, alpha-ionylideneethane synthase; part of the gene cluster that mediates the biosynthesis of abscisic acid (ABA), a phytohormone that acts antagonistically toward salicylic acid (SA), jasmonic acid (JA) and ethylene (ETH) signaling, to impede plant defense responses. The first step of the pathway catalyzes the reaction from farnesyl diphosphate to alpha-ionylideneethane performed by the alpha-ionylideneethane synthase aba3 via a three-step reaction mechanism involving 2 neutral intermediates, beta-farnesene and allofarnesene. The cytochrome P450 monooxygenase aba1 might then be involved in the conversion of alpha-ionylideneethane to alpha-ionylideneacetic acid. Alpha-ionylideneacetic acid is further converted to abscisic acid in 2 steps involving the cytochrome P450 monooxygenase aba2 and the short-chain dehydrogenase/reductase aba4, via the intermediates 1'-deoxy-ABA or 1',4'-trans-diol-ABA, depending on the order of action of these 2 enzymes. Aba2 is responsible for the hydroxylation of carbon atom C-1' and aba4 might be involved in the oxidation of the C-4' carbon atom. The sequence is that of Alpha-ionylideneethane synthase aba3 from Botryotinia fuckeliana (Noble rot fungus).